The sequence spans 58 residues: Small ribosomal subunit protein bS21 (58 aa).

A disordered region spans residues 34 to 58 (KREHYEKPSVKRKKKSEAARKRKFK). Residues 43–58 (VKRKKKSEAARKRKFK) are compositionally biased toward basic residues.

Belongs to the bacterial ribosomal protein bS21 family.

This chain is Small ribosomal subunit protein bS21, found in Clostridium acetobutylicum (strain ATCC 824 / DSM 792 / JCM 1419 / IAM 19013 / LMG 5710 / NBRC 13948 / NRRL B-527 / VKM B-1787 / 2291 / W).